We begin with the raw amino-acid sequence, 682 residues long: Potassium-transporting ATPase ATP-binding subunit (682 aa).

The next 4 helical transmembrane spans lie at 34–54, 62–82, 219–239, and 254–274; these read PVMFIVWIGSLLTTCISIAMA, ALFSAAISGWLWVTVLFANFA, IALTILLIALTIVFLLATATL, and VLVALLVCLIPTTIGGLLSAI. The active-site 4-aspartylphosphate intermediate is Asp307. Residues Asp344, Glu348, 377 to 384, and Lys395 each bind ATP; that span reads FTAQSRMS. 2 residues coordinate Mg(2+): Asp518 and Asp522. Helical transmembrane passes span 588–608, 616–636, and 656–676; these read FAIIPAAFAATYPQLNALNIM, AILSAVIFNALIIVFLIPLAL, and IYGLGGLLVPFIGIKVIDLLL.

It belongs to the cation transport ATPase (P-type) (TC 3.A.3) family. Type IA subfamily. In terms of assembly, the system is composed of three essential subunits: KdpA, KdpB and KdpC.

It localises to the cell inner membrane. It carries out the reaction K(+)(out) + ATP + H2O = K(+)(in) + ADP + phosphate + H(+). Its function is as follows. Part of the high-affinity ATP-driven potassium transport (or Kdp) system, which catalyzes the hydrolysis of ATP coupled with the electrogenic transport of potassium into the cytoplasm. This subunit is responsible for energy coupling to the transport system and for the release of the potassium ions to the cytoplasm. The polypeptide is Potassium-transporting ATPase ATP-binding subunit (Escherichia coli O8 (strain IAI1)).